The chain runs to 501 residues: Aromatase 3 (501 aa).

Cys435 is a binding site for heme.

Belongs to the cytochrome P450 family. The cofactor is heme. Ovary.

The protein localises to the membrane. The catalysed reaction is testosterone + 3 reduced [NADPH--hemoprotein reductase] + 3 O2 = 17beta-estradiol + formate + 3 oxidized [NADPH--hemoprotein reductase] + 4 H2O + 4 H(+). It catalyses the reaction androst-4-ene-3,17-dione + 3 reduced [NADPH--hemoprotein reductase] + 3 O2 = estrone + formate + 3 oxidized [NADPH--hemoprotein reductase] + 4 H2O + 4 H(+). Its function is as follows. Catalyzes the formation of aromatic C18 estrogens from C19 androgens. This chain is Aromatase 3 (CYP19A3), found in Sus scrofa (Pig).